The sequence spans 205 residues: Cerebellin-3 (205 aa).

An N-terminal signal peptide occupies residues 1–32 (MLGTKRHWPPGPSLSLELPLALTLLALRAGWA). The C1q domain occupies 67-205 (APPGRVAFAA…SFSGFLIFPL (139 aa)). Residue Asn-90 is glycosylated (N-linked (GlcNAc...) asparagine).

In terms of assembly, heterohexamer; disulfide-linked heterotrimers. Interacts with CBLN1. May also form oligomers with CBLN2 and CBLN4.

Its subcellular location is the endoplasmic reticulum. It is found in the golgi apparatus. The protein localises to the cis-Golgi network. It localises to the secreted. The protein resides in the synapse. In terms of biological role, may be involved in synaptic functions in the CNS. This chain is Cerebellin-3 (CBLN3), found in Bos taurus (Bovine).